The sequence spans 598 residues: Aspartate--tRNA ligase (598 aa).

An L-aspartate-binding site is contributed by Glu173. The interval 197 to 200 is aspartate; it reads QLFK. Arg219 is an L-aspartate binding site. Residues 219 to 221 and Gln228 contribute to the ATP site; that span reads RDE. L-aspartate is bound at residue His449. Residue Glu483 participates in ATP binding. An L-aspartate-binding site is contributed by Arg490. 535–538 serves as a coordination point for ATP; it reads GLDR.

The protein belongs to the class-II aminoacyl-tRNA synthetase family. Type 1 subfamily. Homodimer.

Its subcellular location is the cytoplasm. The catalysed reaction is tRNA(Asp) + L-aspartate + ATP = L-aspartyl-tRNA(Asp) + AMP + diphosphate. Its function is as follows. Catalyzes the attachment of L-aspartate to tRNA(Asp) in a two-step reaction: L-aspartate is first activated by ATP to form Asp-AMP and then transferred to the acceptor end of tRNA(Asp). This chain is Aspartate--tRNA ligase, found in Shewanella halifaxensis (strain HAW-EB4).